Consider the following 179-residue polypeptide: Replication restart protein DnaT (179 aa).

The tract at residues 155-179 (NGGLPKRDVNTVSEPDSQIPPGFRG) is disordered.

Belongs to the DnaT family. Homooligomerizes. Interacts with PriB. Component of the replication restart primosome. Primosome assembly occurs via a 'hand-off' mechanism. PriA binds to replication forks, subsequently PriB then DnaT bind; DnaT then displaces ssDNA to generate the helicase loading substrate.

Involved in the restart of stalled replication forks, which reloads the replicative helicase on sites other than the origin of replication. Can function in multiple replication restart pathways. Displaces ssDNA from a PriB-ssDNA complex. Probably forms a spiral filament on ssDNA. The sequence is that of Replication restart protein DnaT from Escherichia coli O8 (strain IAI1).